The sequence spans 686 residues: LEAF RUST 10 DISEASE-RESISTANCE LOCUS RECEPTOR-LIKE PROTEIN KINASE-like 1.3 (686 aa).

Positions 1–33 are cleaved as a signal peptide; that stretch reads MFSPVLFRFSKPNSFLVLLFFLSYIHFLPCAQS. At 34 to 264 the chain is on the extracellular side; that stretch reads QREPCDTLFR…AGLSKKGKIG (231 aa). N-linked (GlcNAc...) asparagine glycosylation is found at Asn76, Asn93, Asn175, Asn190, and Asn236. A helical transmembrane segment spans residues 265 to 285; it reads IGFASGFLGATLIGGCLLCIF. Topologically, residues 286–686 are cytoplasmic; it reads IRRRKKLATQ…SSSNTTASSF (401 aa). The Protein kinase domain occupies 358 to 633; that stretch reads ENFSKELGDG…DEIVEVLRVI (276 aa). Residues 364 to 372 and Lys386 each bind ATP; that span reads LGDGGFGTV. Tyr432 is modified (phosphotyrosine). The Proton acceptor role is filled by Asp482. A Phosphoserine modification is found at Ser515. Phosphothreonine is present on residues Thr516 and Thr521. Tyr529 bears the Phosphotyrosine mark. The segment at 657–686 is disordered; the sequence is GLLKHGVPPPLSPETDKTTASSSNTTASSF. Over residues 674–686 the composition is skewed to low complexity; the sequence is TTASSSNTTASSF.

Belongs to the protein kinase superfamily. Ser/Thr protein kinase family.

Its subcellular location is the cell membrane. It catalyses the reaction L-seryl-[protein] + ATP = O-phospho-L-seryl-[protein] + ADP + H(+). The catalysed reaction is L-threonyl-[protein] + ATP = O-phospho-L-threonyl-[protein] + ADP + H(+). The sequence is that of LEAF RUST 10 DISEASE-RESISTANCE LOCUS RECEPTOR-LIKE PROTEIN KINASE-like 1.3 from Arabidopsis thaliana (Mouse-ear cress).